The following is a 284-amino-acid chain: Pantothenate synthetase (284 aa).

30–37 (MGNLHDGH) is an ATP binding site. The active-site Proton donor is His-37. Residue Gln-61 participates in (R)-pantoate binding. Beta-alanine is bound at residue Gln-61. 149–152 (GEKD) serves as a coordination point for ATP. Residue Gln-155 participates in (R)-pantoate binding. ATP contacts are provided by residues Val-178 and 186-189 (LSSR).

Belongs to the pantothenate synthetase family. As to quaternary structure, homodimer.

It localises to the cytoplasm. It carries out the reaction (R)-pantoate + beta-alanine + ATP = (R)-pantothenate + AMP + diphosphate + H(+). Its pathway is cofactor biosynthesis; (R)-pantothenate biosynthesis; (R)-pantothenate from (R)-pantoate and beta-alanine: step 1/1. Its function is as follows. Catalyzes the condensation of pantoate with beta-alanine in an ATP-dependent reaction via a pantoyl-adenylate intermediate. The chain is Pantothenate synthetase from Klebsiella pneumoniae subsp. pneumoniae (strain ATCC 700721 / MGH 78578).